The chain runs to 197 residues: MGLSSTDKKDRRNMLFAAIPSICASSPKKISIYNEEMIVARCFIGFLIFSRKSLGKTFKETLDGRIESIQEELQQFFNPKQVIPGESNEQQRLLRISLRICSAVVESLPTAACAPKCEKTVQALLCRNLNVKSATLLNATSSRRIRLQDDIVTGFHFSVSERFVSGSTFKASTVEQIREAFVPIDLIREGLIVLRKV.

A helical transmembrane segment spans residues 30–50; that stretch reads ISIYNEEMIVARCFIGFLIFS.

This sequence belongs to the ATPase protein MI25 family. As to quaternary structure, F-type ATPases have 2 components, CF(1) - the catalytic core - and CF(0) - the membrane proton channel. CF(1) has five subunits: alpha(3), beta(3), gamma(1), delta(1), epsilon(1). CF(0) has three main subunits: a, b and c.

Its subcellular location is the mitochondrion membrane. This is one of the chains of the nonenzymatic component (CF(0) subunit) of the mitochondrial ATPase complex. The polypeptide is ATP synthase protein MI25 (Oryza sativa subsp. indica (Rice)).